The primary structure comprises 520 residues: Type I restriction enzyme EcoR124I/EcoR124II methylase subunit (520 aa).

The tract at residues 10 to 190 (AELHRQIWQI…YEFLISNYAA (181 aa)) is N-terminal domain. S-adenosyl-L-methionine is bound by residues 198 to 203 (EFFTPQ), 230 to 232 (SGS), and glutamate 254. Residues 198–473 (EFFTPQHVSK…NDYNLSVSSY (276 aa)) form a catalytic domain region. Residues 481–510 (EIIDIAELNAELKTTVSKIDQLRKDIDAIV) form a C-terminal tail region.

Belongs to the N(4)/N(6)-methyltransferase family. The type I restriction/modification system is composed of three polypeptides R, M and S; the restriction enzyme has stoichiometry R(2)M(2)S(1) while the methyltransferase is M(2)S(1). There is an equilibrium between R(2)M(2)S(1) and R(1)M(2)S(1); the latter is methylation and translocation proficient but restriction deficient. As to quaternary structure, (Microbial infection) Holoenenzyme interacts with Escherichia phage T7 protein Ocr; this interaction leads to the inhibition of the restriction activity, but may still allow methylation and translocation.

It catalyses the reaction a 2'-deoxyadenosine in DNA + S-adenosyl-L-methionine = an N(6)-methyl-2'-deoxyadenosine in DNA + S-adenosyl-L-homocysteine + H(+). Functionally, the subtype gamma methyltransferase (M) subunit of a type I restriction enzyme. The M and S subunits together form a methyltransferase (MTase) that methylates A-3 on the top and bottom strand of the sequence 5'-GAAN(6)RTCG-3' (for EcoR124I) and 5'-GAAN(7)RTCG-3' (for EcoR124II). In the presence of the R subunit the complex can also act as an endonuclease, binding to the same target sequence but cutting the DNA some distance from this site. Whether the DNA is cut or modified depends on the methylation state of the target sequence. When the target site is unmodified, the DNA is cut. When the target site is hemimethylated, the complex acts as a maintenance MTase modifying the DNA so that both strands become methylated. After locating a non-methylated recognition site, the enzyme complex serves as a molecular motor that translocates DNA in an ATP-dependent manner until a collision occurs that triggers cleavage. The R(1)M(2)S(1) complex translocates an average of 555 bp/second on nicked DNA; the R(2)M(2)S(1) complex translocates at double that speed. The 2 R subunit motors are independent and track along the helical pitch of the DNA, inducing positive supercoiling ahead of themselves. The polypeptide is Type I restriction enzyme EcoR124I/EcoR124II methylase subunit (hsdM) (Escherichia coli).